The chain runs to 333 residues: Oxidoreductase AN1596 (333 aa).

It belongs to the NmrA-type oxidoreductase family.

It participates in secondary metabolite biosynthesis; terpenoid biosynthesis. Oxidoreductase; part of the gene cluster that mediates the biosynthesis of the diterpene ent-pimara-8(14),15-diene (PD). Within the cluster, the HMG-CoA reductase AN1593 functions in the mevalonate pathway, which produces isoprenoid precursors. The geranylgeranyl pyrophosphate (GGPP) synthase AN1592 is needed in the formation of GGPP, the precursor for diterpenes. Lastly, the pimaradiene synthase pbcA performs the 2 cyclization steps that convert GGPP to ent-pimara-8(14),15-diene. The putative roles of the remaining cluster enzymes in ent-pimara-8(14),15-diene biosynthesis is unclear. The cytochrome P450 monooxygenase AN1598, the glutathione S-transferase AN1595, the oxidoreductases AN1596 and AN1597 probably function as decorative enzymes. It is possible that in biological conditions the compound is oxidized to ent-pimara-8(14),15-dien-19-oic acid, which is a bioactive diterpene compound predominant in many plant extracts. In Emericella nidulans (strain FGSC A4 / ATCC 38163 / CBS 112.46 / NRRL 194 / M139) (Aspergillus nidulans), this protein is Oxidoreductase AN1596.